The primary structure comprises 340 residues: Ferrochelatase (340 aa).

Positions 189 and 292 each coordinate Fe cation.

This sequence belongs to the ferrochelatase family.

It localises to the cytoplasm. The enzyme catalyses heme b + 2 H(+) = protoporphyrin IX + Fe(2+). Its pathway is porphyrin-containing compound metabolism; protoheme biosynthesis; protoheme from protoporphyrin-IX: step 1/1. Catalyzes the ferrous insertion into protoporphyrin IX. This Pseudomonas syringae pv. tomato (strain ATCC BAA-871 / DC3000) protein is Ferrochelatase.